We begin with the raw amino-acid sequence, 314 residues long: Elongation factor Ts (314 aa).

The tract at residues 82 to 85 (TDFV) is involved in Mg(2+) ion dislocation from EF-Tu.

Belongs to the EF-Ts family.

The protein resides in the cytoplasm. Its function is as follows. Associates with the EF-Tu.GDP complex and induces the exchange of GDP to GTP. It remains bound to the aminoacyl-tRNA.EF-Tu.GTP complex up to the GTP hydrolysis stage on the ribosome. The polypeptide is Elongation factor Ts (Nostoc punctiforme (strain ATCC 29133 / PCC 73102)).